The sequence spans 246 residues: Acetoacetate decarboxylase (246 aa).

Lys116 functions as the Schiff-base intermediate with acetoacetate in the catalytic mechanism.

It belongs to the ADC family.

It catalyses the reaction acetoacetate + H(+) = acetone + CO2. In terms of biological role, catalyzes the conversion of acetoacetate to acetone and carbon dioxide. This Burkholderia mallei (strain NCTC 10247) protein is Acetoacetate decarboxylase.